Consider the following 253-residue polypeptide: Snake venom serine proteinase 14 (253 aa).

A signal peptide spans 1–18 (MVLIRVLANLLILQLSYA). Residues 19–24 (QKSSEL) constitute a propeptide that is removed on maturation. A Peptidase S1 domain is found at 25–244 (VIGGDECNIN…YTDWIQSIIA (220 aa)). 6 cysteine pairs are disulfide-bonded: cysteine 31–cysteine 158, cysteine 49–cysteine 65, cysteine 93–cysteine 251, cysteine 137–cysteine 205, cysteine 169–cysteine 184, and cysteine 195–cysteine 220. Active-site charge relay system residues include histidine 64 and aspartate 105. 3 N-linked (GlcNAc...) asparagine glycosylation sites follow: asparagine 116, asparagine 117, and asparagine 149. The Charge relay system role is filled by serine 199.

The protein belongs to the peptidase S1 family. Snake venom subfamily. As to quaternary structure, monomer. As to expression, expressed by the venom gland.

It localises to the secreted. Its function is as follows. Snake venom serine protease that may act in the hemostasis system of the prey. The protein is Snake venom serine proteinase 14 of Crotalus adamanteus (Eastern diamondback rattlesnake).